A 92-amino-acid polypeptide reads, in one-letter code: Small ribosomal subunit protein uS19 (92 aa).

This sequence belongs to the universal ribosomal protein uS19 family.

Protein S19 forms a complex with S13 that binds strongly to the 16S ribosomal RNA. This is Small ribosomal subunit protein uS19 from Prochlorococcus marinus (strain MIT 9312).